A 490-amino-acid chain; its full sequence is Stomatal closure-related actin-binding protein 3 (490 aa).

The protein belongs to the SCAB family. As to expression, expressed in roots, stems, leaves, siliques and flowers.

The protein localises to the cytoplasm. Its subcellular location is the cytoskeleton. Probable plant-specific actin binding protein that bundles and stabilizes microfilaments (MFs). The protein is Stomatal closure-related actin-binding protein 3 of Arabidopsis thaliana (Mouse-ear cress).